The sequence spans 150 residues: Protein-export protein SecB (150 aa).

Belongs to the SecB family. As to quaternary structure, homotetramer, a dimer of dimers. One homotetramer interacts with 1 SecA dimer.

It is found in the cytoplasm. In terms of biological role, one of the proteins required for the normal export of preproteins out of the cell cytoplasm. It is a molecular chaperone that binds to a subset of precursor proteins, maintaining them in a translocation-competent state. It also specifically binds to its receptor SecA. This Polaromonas sp. (strain JS666 / ATCC BAA-500) protein is Protein-export protein SecB.